Reading from the N-terminus, the 412-residue chain is Probable cytosolic iron-sulfur protein assembly protein 1 (412 aa).

WD repeat units follow at residues 20–62 (LTPP…LLST), 66–108 (GHKR…GQTT), 165–204 (GHDSEVKSVSWSPSGMLLATCSRDKSIWIWEDLDDGDNNF), 212–255 (EHEG…ACLR), 257–291 (HEGTVWFLSGPRIVSCSDDRTVRVWRRQPKEQAAA), 318–357 (VHDLAVYAVAWSKRTGLLASVGADGRIVIYEERLGVVRTE), and 367–407 (AHGI…VKVD). Residues 108–154 (TGDEGWGLGQETTTNKSESQEEQAQETDILRQQQATHNENDGADDED) are disordered.

It belongs to the WD repeat CIA1 family.

Functionally, essential component of the cytosolic iron-sulfur (Fe/S) protein assembly machinery. Required for the maturation of extramitochondrial Fe/S proteins. This is Probable cytosolic iron-sulfur protein assembly protein 1 (cia1) from Aspergillus niger (strain ATCC MYA-4892 / CBS 513.88 / FGSC A1513).